A 348-amino-acid polypeptide reads, in one-letter code: Holliday junction branch migration complex subunit RuvB (348 aa).

Residues Met-1–Tyr-182 form a large ATPase domain (RuvB-L) region. Residues Ile-21, Arg-22, Gly-63, Lys-66, Thr-67, Thr-68, Glu-129 to Phe-131, Arg-172, Tyr-182, and Arg-219 each bind ATP. Thr-67 is a binding site for Mg(2+). Residues Ser-183–Glu-253 form a small ATPAse domain (RuvB-S) region. The segment at Glu-256–Gln-348 is head domain (RuvB-H). Arg-311 and Arg-316 together coordinate DNA.

Belongs to the RuvB family. As to quaternary structure, homohexamer. Forms an RuvA(8)-RuvB(12)-Holliday junction (HJ) complex. HJ DNA is sandwiched between 2 RuvA tetramers; dsDNA enters through RuvA and exits via RuvB. An RuvB hexamer assembles on each DNA strand where it exits the tetramer. Each RuvB hexamer is contacted by two RuvA subunits (via domain III) on 2 adjacent RuvB subunits; this complex drives branch migration. In the full resolvosome a probable DNA-RuvA(4)-RuvB(12)-RuvC(2) complex forms which resolves the HJ.

It localises to the cytoplasm. It catalyses the reaction ATP + H2O = ADP + phosphate + H(+). Functionally, the RuvA-RuvB-RuvC complex processes Holliday junction (HJ) DNA during genetic recombination and DNA repair, while the RuvA-RuvB complex plays an important role in the rescue of blocked DNA replication forks via replication fork reversal (RFR). RuvA specifically binds to HJ cruciform DNA, conferring on it an open structure. The RuvB hexamer acts as an ATP-dependent pump, pulling dsDNA into and through the RuvAB complex. RuvB forms 2 homohexamers on either side of HJ DNA bound by 1 or 2 RuvA tetramers; 4 subunits per hexamer contact DNA at a time. Coordinated motions by a converter formed by DNA-disengaged RuvB subunits stimulates ATP hydrolysis and nucleotide exchange. Immobilization of the converter enables RuvB to convert the ATP-contained energy into a lever motion, pulling 2 nucleotides of DNA out of the RuvA tetramer per ATP hydrolyzed, thus driving DNA branch migration. The RuvB motors rotate together with the DNA substrate, which together with the progressing nucleotide cycle form the mechanistic basis for DNA recombination by continuous HJ branch migration. Branch migration allows RuvC to scan DNA until it finds its consensus sequence, where it cleaves and resolves cruciform DNA. The sequence is that of Holliday junction branch migration complex subunit RuvB from Chlorobium limicola (strain DSM 245 / NBRC 103803 / 6330).